The sequence spans 207 residues: Outer-membrane lipoprotein LolB (207 aa).

Positions 1–23 are cleaved as a signal peptide; the sequence is MPTMNRSRRLALLCLGAPLLLAA. The N-palmitoyl cysteine moiety is linked to residue Cys24. Residue Cys24 is the site of S-diacylglycerol cysteine attachment. The tract at residues 171 to 207 is disordered; it reads PSASQAPAPRPRRIDLEREGGPTPLAVKLVIDPEEAP.

The protein belongs to the LolB family. In terms of assembly, monomer.

It localises to the cell outer membrane. Plays a critical role in the incorporation of lipoproteins in the outer membrane after they are released by the LolA protein. In Cupriavidus pinatubonensis (strain JMP 134 / LMG 1197) (Cupriavidus necator (strain JMP 134)), this protein is Outer-membrane lipoprotein LolB.